A 417-amino-acid chain; its full sequence is MSLSKKLTLDKVDLKGKRVIMRVDFNVPMKNKEITNNQRIKAALPSINYCLDNGAKSVVLMSHLGRPDGVPMPDKYSLEPVAAELKSLLGKDVLFLKDCVGPEVEQACANPPNGSIILLENLRFHVEEEGKGKDASGNKIKAEPAKMEAFQASLSKLGDVYVNDAFGTAHRAHSSMVGVNLPQKACGFLMKKELTYFAKALDSPERPFLAILGGAKVADKIQLINNMLDKVNEMIIGGGMGFTFLKVLNNMEIGTSLFDEEGAKIVKDLMAKAEKNGVKITLPVDFVTADKFDENAKTGQATLASGIPAGWMGLDCGPKSSKKYVEVVTWAKQIVWNGPVGVFEWEEFARGTKELMNNVVEATKRGCITIIGGGDTATCCAKWNTEDKVSHVSTGGGASLELLEGKVLPGVSTLNNV.

Position 2 is an N-acetylserine (Ser2). Phosphoserine is present on residues Ser2 and Ser4. An N6-succinyllysine modification is found at Lys6. Lys11 carries the post-translational modification N6-acetyllysine. Residues Val23, Asp24, Phe25, Asn26, Gln38, Arg39, Ser62, His63, Gly65, and Arg66 each contribute to the (2R)-3-phosphoglycerate site. The tract at residues 38 to 43 is mitochondrial targeting region exposed following cis-trans isomerization by PIN1 and recognized by the TOM complex for mitochondrial translocation of the protein; it reads QRIKAA. The residue at position 75 (Lys75) is an N6-acetyllysine. The residue at position 76 (Tyr76) is a Phosphotyrosine. An N6-acetyllysine mark is found at Lys86 and Lys91. N6-(2-hydroxyisobutyryl)lysine; alternate is present on Lys97. Lys97 is subject to N6-acetyllysine; alternate. The (2R)-3-phosphoglycerate site is built by Leu122 and Arg123. N6-acetyllysine; alternate is present on Lys131. Lys131 bears the N6-malonyllysine; alternate mark. The residue at position 146 (Lys146) is an N6-acetyllysine. His170 and Arg171 together coordinate (2R)-3-phosphoglycerate. An N6-succinyllysine modification is found at Lys191. Tyr196 carries the phosphotyrosine modification. The residue at position 199 (Lys199) is an N6-acetyllysine. Ser203 is subject to Phosphoserine. Residue Gly214 coordinates ADP. Position 214 (Gly214) interacts with CDP. The AMP site is built by Ala215 and Lys216. Position 215 (Ala215) interacts with ATP. Residue Ala215 coordinates Mg(2+). Lys216 is modified (N6-(2-hydroxyisobutyryl)lysine). Residues Ala218 and Asp219 each contribute to the Mg(2+) site. CDP is bound at residue Asp219. Position 220 (Lys220) interacts with AMP. Position 220 (Lys220) interacts with ATP. N6-(2-hydroxyisobutyryl)lysine is present on Lys220. Residue Gly238 participates in ADP binding. Gly238 contacts CDP. Gly239 is an AMP binding site. Gly239 is an ATP binding site. 2 positions are modified to N6-acetyllysine: Lys267 and Lys291. AMP is bound at residue Gly313. Residue Gly313 coordinates ATP. Residue Lys323 is modified to N6-(2-hydroxyisobutyryl)lysine. Residues Gly338, Val340, and Phe343 each coordinate CDP. Phe343 is an ADP binding site. Residue Glu344 participates in AMP binding. Residues Glu344, Asp375, and Thr376 each contribute to the ATP site. Residue Asp375 participates in Mg(2+) binding.

It belongs to the phosphoglycerate kinase family. As to quaternary structure, monomer. Interacts with kinase MAPK1/ERK2; the interaction is direct, occurs under hypoxic conditions, and promotes its interaction with PIN1. Interacts with peptidyl-prolyl cis-trans isomerase PIN1; the interaction is direct, occurs under hypoxic conditions, and targets the protein to the mitochondrion by promoting interactions with the TOM complex. Interacts with mitochondrial circRNA mcPGK1 (via its 2nd stem-loop); the interaction is direct and targets the protein to the mitochondrion by promoting interactions with the TOM complex. Interacts with pyruvate dehydrogenase kinase PDK1; the interaction is direct, occurs under hypoxic conditions and leads to PDK1-mediated inhibition of pyruvate dehydrogenase complex activity. Requires Mg(2+) as cofactor. Post-translationally, phosphorylated at Ser-203 by MAPK1/ERK2 under hypoxic conditions, which promotes its mitochondrial targeting.

It localises to the cytoplasm. The protein localises to the cytosol. The protein resides in the mitochondrion matrix. The catalysed reaction is (2R)-3-phosphoglycerate + ATP = (2R)-3-phospho-glyceroyl phosphate + ADP. The enzyme catalyses L-seryl-[protein] + ATP = O-phospho-L-seryl-[protein] + ADP + H(+). Its pathway is carbohydrate degradation; glycolysis; pyruvate from D-glyceraldehyde 3-phosphate: step 2/5. In terms of biological role, catalyzes one of the two ATP producing reactions in the glycolytic pathway via the reversible conversion of 1,3-diphosphoglycerate to 3-phosphoglycerate. Both L- and D- forms of purine and pyrimidine nucleotides can be used as substrates, but the activity is much lower on pyrimidines. In addition to its role as a glycolytic enzyme, it seems that PGK-1 acts as a polymerase alpha cofactor protein (primer recognition protein). Acts as a protein kinase when localized to the mitochondrion where it phosphorylates pyruvate dehydrogenase kinase PDK1 to inhibit pyruvate dehydrogenase complex activity and suppress the formation of acetyl-coenzyme A from pyruvate, and consequently inhibit oxidative phosphorylation and promote glycolysis. May play a role in sperm motility. The chain is Phosphoglycerate kinase 1 (PGK1) from Notamacropus eugenii (Tammar wallaby).